The sequence spans 311 residues: Probable cell division protein WhiA (311 aa).

Positions 277-311 form a DNA-binding region, H-T-H motif; it reads TLKEVADQIPDGPISKSGVNHRFKKLHELAETLKE.

It belongs to the WhiA family.

Its function is as follows. Involved in cell division and chromosome segregation. The chain is Probable cell division protein WhiA from Lactobacillus helveticus (strain DPC 4571).